Consider the following 254-residue polypeptide: Hemin import ATP-binding protein HmuV (254 aa).

The 238-residue stretch at 2–239 folds into the ABC transporter domain; it reads LNINQVNINL…DTLSQVWHYD (238 aa). 34 to 41 serves as a coordination point for ATP; sequence GPNGAGKS.

This sequence belongs to the ABC transporter superfamily. Heme (hemin) importer (TC 3.A.1.14.5) family. As to quaternary structure, the complex is composed of two ATP-binding proteins (HmuV), two transmembrane proteins (HmuU) and a solute-binding protein (HmuT).

It localises to the cell inner membrane. Part of the ABC transporter complex HmuTUV involved in hemin import. Responsible for energy coupling to the transport system. This Shewanella denitrificans (strain OS217 / ATCC BAA-1090 / DSM 15013) protein is Hemin import ATP-binding protein HmuV.